The chain runs to 134 residues: Large ribosomal subunit protein uL16c (134 aa).

Residues 1–17 (MLSPKRTRFRKQHRGRM) show a composition bias toward basic residues. The interval 1-21 (MLSPKRTRFRKQHRGRMKGIS) is disordered.

This sequence belongs to the universal ribosomal protein uL16 family. Part of the 50S ribosomal subunit.

The protein resides in the plastid. It is found in the chloroplast. The protein is Large ribosomal subunit protein uL16c of Solanum bulbocastanum (Wild potato).